The sequence spans 176 residues: Transmembrane protein 238 (176 aa).

Residues 1 to 22 (MAAAPAVCASQGSPPGAPSAPA) form a disordered region. Residues 1-36 (MAAAPAVCASQGSPPGAPSAPAAAPAPAAGLGRCRM) lie on the Cytoplasmic side of the membrane. Low complexity predominate over residues 9 to 22 (ASQGSPPGAPSAPA). A helical transmembrane segment spans residues 37–57 (ALLLAVALDVAGMAALLTGVF). The Extracellular portion of the chain corresponds to 58–69 (AQLQVRGRDFGD). A helical membrane pass occupies residues 70-90 (LLIYSGALLVFLSLLGWILWY). The Cytoplasmic segment spans residues 91–176 (TGNIEISRQE…GPGAAGAGSE (86 aa)). Over residues 124 to 137 (SAPAAAGQRPAPGS) the composition is skewed to low complexity. A disordered region spans residues 124 to 157 (SAPAAAGQRPAPGSRRARRAARAPPPPAAGSRRV). Phosphoserine is present on S175.

It localises to the membrane. This chain is Transmembrane protein 238 (TMEM238), found in Homo sapiens (Human).